The sequence spans 145 residues: Large ribosomal subunit protein uL16 (145 aa).

Belongs to the universal ribosomal protein uL16 family. As to quaternary structure, part of the 50S ribosomal subunit.

In terms of biological role, binds 23S rRNA and is also seen to make contacts with the A and possibly P site tRNAs. This Lactobacillus johnsonii (strain CNCM I-12250 / La1 / NCC 533) protein is Large ribosomal subunit protein uL16.